A 483-amino-acid chain; its full sequence is Phloretin 2'-O-glucosyltransferase (483 aa).

The Proton acceptor role is filled by H15. H15 serves as a coordination point for an anthocyanidin. D118 acts as the Charge relay in catalysis. UDP-alpha-D-glucose-binding residues include T140, A360, Q362, H377, W380, N381, S382, and E385. Residue A400 coordinates an anthocyanidin. 2 residues coordinate UDP-alpha-D-glucose: E401 and Q402.

This sequence belongs to the UDP-glycosyltransferase family.

It carries out the reaction phloretin + UDP-alpha-D-glucose = phlorizin + UDP + H(+). Functionally, glycosyltransferase that possesses phloretin 2'-O-glycosyltransferase activity. Converts phloretin to phlorizin (phloretin 2'-O-glucoside), a potent antioxidant. Is specific for phloretin and does not possess glycosyltransferase activity toward naringenin, naringenin chalcone, eriodictyol, eriodictyol chalcone, apigenin, luteolin, kaempferol, quercetin, isoliquiritigenin, butein, caffeic acid, 2-coumaric acid, 3-coumaric acid, 3-hydroxybenzoic acid, 3,4-dihydroxybenzoic acid and 3,4-dihydroxyhydrocinnamic acid. Can glycosylate phloretin in the presence of UDP-glucose, UDP-xylose and UDP-galactose. This Pyrus communis (Pear) protein is Phloretin 2'-O-glucosyltransferase.